The primary structure comprises 558 residues: Glucose-6-phosphate isomerase (558 aa).

A2 carries the post-translational modification N-acetylalanine. K12 carries the post-translational modification N6-acetyllysine. Phosphoserine is present on residues S86 and S107. K142 bears the N6-acetyllysine mark. 159–160 (GS) contacts D-glucose 6-phosphate. Position 185 is a phosphoserine; by CK2 (S185). 210–215 (SKTFTT) contacts D-glucose 6-phosphate. T250 carries the post-translational modification Phosphothreonine. The D-glucose 6-phosphate site is built by Q354, E358, and H389. E358 serves as the catalytic Proton donor. Residue H389 is part of the active site. K454 is subject to N6-acetyllysine; alternate. The residue at position 454 (K454) is an N6-malonyllysine; alternate. Position 454 is an N6-succinyllysine; alternate (K454). Residue S455 is modified to Phosphoserine. K519 is a D-glucose 6-phosphate binding site. Residue K519 is part of the active site.

This sequence belongs to the GPI family. In terms of assembly, homodimer; in the catalytically active form. Monomer in the secreted form. Post-translationally, phosphorylation at Ser-185 by CK2 has been shown to decrease enzymatic activity and may contribute to secretion by a non-classical secretory pathway. ISGylated.

Its subcellular location is the cytoplasm. The protein resides in the secreted. The enzyme catalyses alpha-D-glucose 6-phosphate = beta-D-fructose 6-phosphate. Its pathway is carbohydrate degradation; glycolysis; D-glyceraldehyde 3-phosphate and glycerone phosphate from D-glucose: step 2/4. In the cytoplasm, catalyzes the conversion of glucose-6-phosphate to fructose-6-phosphate, the second step in glycolysis, and the reverse reaction during gluconeogenesis. Besides it's role as a glycolytic enzyme, also acts as a secreted cytokine: acts as an angiogenic factor (AMF) that stimulates endothelial cell motility. Acts as a neurotrophic factor, neuroleukin, for spinal and sensory neurons. It is secreted by lectin-stimulated T-cells and induces immunoglobulin secretion. This chain is Glucose-6-phosphate isomerase, found in Rattus norvegicus (Rat).